Consider the following 306-residue polypeptide: UDP-N-acetylenolpyruvoylglucosamine reductase (306 aa).

The FAD-binding PCMH-type domain occupies 34–199 (KSGGAAEWLF…VAATFRGHAE (166 aa)). R179 is an active-site residue. A disordered region spans residues 215-234 (REASQPLRSRTGGSTFKNPQ). The span at 220–232 (PLRSRTGGSTFKN) shows a compositional bias: polar residues. The active-site Proton donor is S228. Residue E298 is part of the active site.

Belongs to the MurB family. The cofactor is FAD.

It localises to the cytoplasm. It carries out the reaction UDP-N-acetyl-alpha-D-muramate + NADP(+) = UDP-N-acetyl-3-O-(1-carboxyvinyl)-alpha-D-glucosamine + NADPH + H(+). The protein operates within cell wall biogenesis; peptidoglycan biosynthesis. Functionally, cell wall formation. This is UDP-N-acetylenolpyruvoylglucosamine reductase from Rhizorhabdus wittichii (strain DSM 6014 / CCUG 31198 / JCM 15750 / NBRC 105917 / EY 4224 / RW1) (Sphingomonas wittichii).